Here is a 325-residue protein sequence, read N- to C-terminus: NADH-cytochrome b5 reductase 2 (325 aa).

Residues 32–48 traverse the membrane as a helical segment; that stretch reads VPLYGGLALAAGGAYYY. The FAD-binding FR-type domain maps to 74-179; the sequence is QGWVDLKLAG…KGPIPKYPWE (106 aa). Residue 182-217 coordinates FAD; sequence KHDHICMIAGGTGITPMYQIIRKIFNNPNDKTKVTL.

This sequence belongs to the flavoprotein pyridine nucleotide cytochrome reductase family. It depends on FAD as a cofactor.

It localises to the mitochondrion outer membrane. It carries out the reaction 2 Fe(III)-[cytochrome b5] + NADH = 2 Fe(II)-[cytochrome b5] + NAD(+) + H(+). Functionally, may mediate the reduction of outer membrane cytochrome b5. The sequence is that of NADH-cytochrome b5 reductase 2 (MCR1) from Coccidioides immitis (strain RS) (Valley fever fungus).